The sequence spans 204 residues: Urease accessory protein UreG (204 aa).

12 to 19 (GPVGSGKT) serves as a coordination point for GTP.

Belongs to the SIMIBI class G3E GTPase family. UreG subfamily. As to quaternary structure, homodimer. UreD, UreF and UreG form a complex that acts as a GTP-hydrolysis-dependent molecular chaperone, activating the urease apoprotein by helping to assemble the nickel containing metallocenter of UreC. The UreE protein probably delivers the nickel.

It is found in the cytoplasm. Its function is as follows. Facilitates the functional incorporation of the urease nickel metallocenter. This process requires GTP hydrolysis, probably effectuated by UreG. The polypeptide is Urease accessory protein UreG (Hahella chejuensis (strain KCTC 2396)).